We begin with the raw amino-acid sequence, 601 residues long: MSSQRNYCLAGCLSSCILVILMSFSDAASFQYYQVPQQDQEYRMKTLQRLPSPDMLKALEYIENLRKQASRTESLPDYTSYQGAPFLSEQKDTQALSTDTAKSPTSDDESEWMRAMLEALMQAEKEAKVSPQEKNNLYMDKNIPPELIEDYDSNKWSEKRPKAGKFSSRLYDDYSRDNPLKRTNEIVEGQYTPQSLATLQSVFQELGKLKGQANNKRDRMEEDQKLYKDDEDDLYKANNIAYEDVAGGEDWNPIEEKVESQTQEELKESKEEVEKTDDMEDEIKRSGLLGLQDEEPEKDTKEQESENLSNLMNTYLNMWMNRMDKGKQNPDRRSLRFSGKELDPEAIYQLIDISRNLQIPPEDLIDMLRDEDGRKFGGRLESEKEVDVPLDLDEVTETMTDKTNVYKNKQGFVRQPTSPVLPNIPEGLTVEDMVNLMGADKLQNRFKQNNGLQRPYPMLSKIKGHKAIWPKESEKRQIEYESRPEKEEELADYVVKMLAKYPELLGNNQNKKMPIPYSAGDLQELEKQYENALRGYVNMRGYQDLETVSSSNRRLSTRENDDTQNKQYIDEDLLMKVLEYLNQEKAEKARDHSVKRSMENM.

Residues 1 to 30 (MSSQRNYCLAGCLSSCILVILMSFSDAASF) form the signal peptide. The segment at 89 to 109 (EQKDTQALSTDTAKSPTSDDE) is disordered. The span at 93–104 (TQALSTDTAKSP) shows a compositional bias: polar residues. Tyr-151 is subject to Sulfotyrosine. A compositionally biased stretch (basic and acidic residues) spans 258–273 (VESQTQEELKESKEEV). Residues 258–307 (VESQTQEELKESKEEVEKTDDMEDEIKRSGLLGLQDEEPEKDTKEQESEN) form a disordered region.

This sequence belongs to the chromogranin/secretogranin protein family.

It localises to the secreted. In terms of biological role, neuroendocrine protein of the granin family that regulates the biogenesis of secretory granules. The protein is Secretogranin-2 of Pelophylax ridibundus (Marsh frog).